Reading from the N-terminus, the 388-residue chain is Glucose-1-phosphate adenylyltransferase (388 aa).

Alpha-D-glucose 1-phosphate contacts are provided by residues tyrosine 100, glycine 165, 180 to 181 (EK), and serine 191.

Belongs to the bacterial/plant glucose-1-phosphate adenylyltransferase family. In terms of assembly, homotetramer.

It carries out the reaction alpha-D-glucose 1-phosphate + ATP + H(+) = ADP-alpha-D-glucose + diphosphate. Its pathway is glycan biosynthesis; glycogen biosynthesis. Its function is as follows. Involved in the biosynthesis of ADP-glucose, a building block required for the elongation reactions to produce glycogen. Catalyzes the reaction between ATP and alpha-D-glucose 1-phosphate (G1P) to produce pyrophosphate and ADP-Glc. The chain is Glucose-1-phosphate adenylyltransferase from Clostridium perfringens (strain SM101 / Type A).